The chain runs to 325 residues: Peroxidase 1 (325 aa).

Positions 1-21 (MAIKNILALVVLLSVVGVSVA) are cleaved as a signal peptide. Intrachain disulfides connect C35–C113, C68–C73, C119–C321, and C198–C230. H66 (proton acceptor) is an active-site residue. Ca(2+)-binding residues include D67, V70, G72, D74, and S76. Residue P161 coordinates substrate. Position 191 (H191) interacts with heme b. Ca(2+) is bound at residue T192. The N-linked (GlcNAc...) asparagine glycan is linked to N207. Residues D242, S245, and D250 each contribute to the Ca(2+) site.

This sequence belongs to the peroxidase family. Classical plant (class III) peroxidase subfamily. Heme b serves as cofactor. The cofactor is Ca(2+). Slightly expressed in roots.

It is found in the secreted. The catalysed reaction is 2 a phenolic donor + H2O2 = 2 a phenolic radical donor + 2 H2O. In terms of biological role, removal of H(2)O(2), oxidation of toxic reductants, biosynthesis and degradation of lignin, suberization, auxin catabolism, response to environmental stresses such as wounding, pathogen attack and oxidative stress. These functions might be dependent on each isozyme/isoform in each plant tissue. The protein is Peroxidase 1 (PER1) of Arabidopsis thaliana (Mouse-ear cress).